The primary structure comprises 253 residues: 7-carboxy-7-deazaguanine synthase (253 aa).

Residues 12–14 (WQG) and Arg-32 contribute to the substrate site. Residues 23–253 (AFGRRQIFVR…FQVHKYLNVL (231 aa)) enclose the Radical SAM core domain. [4Fe-4S] cluster contacts are provided by Cys-36, Cys-40, and Cys-43. Ser-45 is a Mg(2+) binding site. Thr-98 is a substrate binding site. Gly-100 lines the S-adenosyl-L-methionine pocket.

It belongs to the radical SAM superfamily. 7-carboxy-7-deazaguanine synthase family. In terms of assembly, homodimer. Requires [4Fe-4S] cluster as cofactor. It depends on S-adenosyl-L-methionine as a cofactor. Mg(2+) serves as cofactor.

The catalysed reaction is 6-carboxy-5,6,7,8-tetrahydropterin + H(+) = 7-carboxy-7-deazaguanine + NH4(+). The protein operates within purine metabolism; 7-cyano-7-deazaguanine biosynthesis. Functionally, catalyzes the complex heterocyclic radical-mediated conversion of 6-carboxy-5,6,7,8-tetrahydropterin (CPH4) to 7-carboxy-7-deazaguanine (CDG), a step common to the biosynthetic pathways of all 7-deazapurine-containing compounds. The protein is 7-carboxy-7-deazaguanine synthase of Thermococcus kodakarensis (strain ATCC BAA-918 / JCM 12380 / KOD1) (Pyrococcus kodakaraensis (strain KOD1)).